Consider the following 378-residue polypeptide: Ferredoxin--NADP reductase, embryo isozyme, chloroplastic (378 aa).

A chloroplast-targeting transit peptide spans 1–62; that stretch reads MASALGAQAS…SRHMNKIFSM (62 aa). In terms of domain architecture, FAD-binding FR-type spans 93–221; it reads KEPYTATIVS…TGPSGKIMLL (129 aa). FAD is bound by residues 153–156, 174–176, tyrosine 180, 195–197, and threonine 237; these read RLYS, CVR, and ICS. NADP(+) is bound by residues serine 156 and arginine 176. Residues threonine 237, 269-270, 299-300, lysine 309, 337-338, and glutamate 376 contribute to the NADP(+) site; these read VA, SR, and GL.

The protein belongs to the ferredoxin--NADP reductase type 1 family. It depends on FAD as a cofactor.

Its subcellular location is the plastid. It localises to the chloroplast. The enzyme catalyses 2 reduced [2Fe-2S]-[ferredoxin] + NADP(+) + H(+) = 2 oxidized [2Fe-2S]-[ferredoxin] + NADPH. It participates in energy metabolism; photosynthesis. May play a key role in regulating the relative amounts of cyclic and non-cyclic electron flow to meet the demands of the plant for ATP and reducing power. Is involved in nitrate assimilation. The polypeptide is Ferredoxin--NADP reductase, embryo isozyme, chloroplastic (Oryza sativa subsp. japonica (Rice)).